Reading from the N-terminus, the 145-residue chain is Large-conductance mechanosensitive channel (145 aa).

The next 3 helical transmembrane spans lie at 10-30, 41-61, and 87-107; these read FALKGNVMDLAVGVIIGGAFA, IMPIVAFIAGGEINFKNMFLI, and GNFITVLINFLILAFIIFMMV.

It belongs to the MscL family. In terms of assembly, homopentamer.

The protein resides in the cell inner membrane. In terms of biological role, channel that opens in response to stretch forces in the membrane lipid bilayer. May participate in the regulation of osmotic pressure changes within the cell. In Psychrobacter arcticus (strain DSM 17307 / VKM B-2377 / 273-4), this protein is Large-conductance mechanosensitive channel.